The following is a 459-amino-acid chain: Exodeoxyribonuclease 7 large subunit (459 aa).

It belongs to the XseA family. In terms of assembly, heterooligomer composed of large and small subunits.

The protein resides in the cytoplasm. It carries out the reaction Exonucleolytic cleavage in either 5'- to 3'- or 3'- to 5'-direction to yield nucleoside 5'-phosphates.. Bidirectionally degrades single-stranded DNA into large acid-insoluble oligonucleotides, which are then degraded further into small acid-soluble oligonucleotides. This chain is Exodeoxyribonuclease 7 large subunit, found in Pseudomonas entomophila (strain L48).